The primary structure comprises 235 residues: MSDAKQNTPTKALVVFSGGQDSTTCLIQALSQYDEVHGITFDYGQRHRQEIEVAKSLATELKLASHKVMDTTLLNELAISALTRDAIPVSHELMNNGLPNTFVPGRNILFLTLAGIYAYQLGCDAIITGVCETDFSGYPDCRNEFVQSMQNSLALGMDKPLKIITPLMWLNKAETWALADKYQQLALVQHQTLTCYNGIVGKGCGDCPACVLRQRGLDDYLQNSQSVMDSLNSKL.

Residue 16-26 (FSGGQDSTTCL) participates in ATP binding. Residues Cys-195, Cys-204, Cys-207, and Cys-210 each contribute to the Zn(2+) site.

The protein belongs to the QueC family. It depends on Zn(2+) as a cofactor.

It carries out the reaction 7-carboxy-7-deazaguanine + NH4(+) + ATP = 7-cyano-7-deazaguanine + ADP + phosphate + H2O + H(+). It participates in purine metabolism; 7-cyano-7-deazaguanine biosynthesis. Its function is as follows. Catalyzes the ATP-dependent conversion of 7-carboxy-7-deazaguanine (CDG) to 7-cyano-7-deazaguanine (preQ(0)). This Shewanella frigidimarina (strain NCIMB 400) protein is 7-cyano-7-deazaguanine synthase.